We begin with the raw amino-acid sequence, 877 residues long: MGDTEIVPLRVQNVLDSEIIRLNLWSMKFNATSFKLEGFVRNEEGTMMQKVCSEFICRRFTSTLLFDVSGRFFDLVGQIDREYQQKMGMPSRIIDEFSNGIPENWADLIYSCMSANQRSALRPIQQAPKEPIRTRTEPIVTLADETELTGGCQKNSENEKERNRREREEQQTKERERRLEEEKQRRDAEAEAERRRKEEEELEEANYTLRAPKSQNGEPITPIRFTRGHDNGGAKKVFIFEQTPVRKQGPIASSTPQQKQRLADGANNQIPPTQKSQDSVQAVQPPPPRPAARNAQFASDADLFAVPKAPPSKSVRNLAASNVDIFADVDSVLDTFHFESTPGRVRKPGRRNVSSPSPEPRHRSSSRDGYEQSRYSQRYEHDNSRWSRHNATYRRHEDESRMSRKRSIVRDDFEYSRRHDDGARRRDYYDADIQGDSKRYRGRDASSSSGRSVRFEEEHRRHGDEYRDPRGPRDYNDYGRRRNHANSRSGEDEEKLNAIVRREKELRNRLQKSQKASSSSYRHRSNSSDAEESLNEWDIENQELLDNSMMFGDGIPKRSNARKDKFVKKQATRSKPANSTKSPAQARKKKRASLEDNRDLNDSIACNRPRRSCVTPVAKKITWRKQDLDRLKRVIALKKPSASDADWTEVLRLLAKEGVVEPEVVRQIAITRLKWVEPEQNEEVLKQVEEVEQKRRRGAVARVKENVKMHEELREGGNHRAEDLQSGVESMEDYQPEDVAADQSLLALRTPIVTKKRGGTRASIMPKPVEDSPMSRGNNSTFNSPRLEQTKAKDIETNFKYVQHLSMMQARPSSRLKKSSSMNNSTYRGNKNTSISLEKGTQKALKIINRGTTIHEDDENEDNDDDDDMREEDTSIY.

The SANTA domain occupies 20 to 107 (IRLNLWSMKF…SNGIPENWAD (88 aa)). Disordered stretches follow at residues 122–315 (RPIQ…SKSV), 338–535 (FEST…ESLN), and 549–604 (MMFG…NDSI). Residues 153–211 (QKNSENEKERNRREREEQQTKERERRLEEEKQRRDAEAEAERRRKEEEELEEANYTLRA) adopt a coiled-coil conformation. Residues 156-199 (SENEKERNRREREEQQTKERERRLEEEKQRRDAEAEAERRRKEE) are compositionally biased toward basic and acidic residues. Positions 251–279 (IASSTPQQKQRLADGANNQIPPTQKSQDS) are enriched in polar residues. Composition is skewed to basic and acidic residues over residues 359–385 (EPRH…DNSR), 394–444 (RRHE…RGRD), and 453–480 (VRFE…DYGR). Residues 491–549 (EDEEKLNAIVRREKELRNRLQKSQKASSSSYRHRSNSSDAEESLNEWDIENQELLDNSM) adopt a coiled-coil conformation. The segment covering 511–520 (QKSQKASSSS) has biased composition (low complexity). Polar residues predominate over residues 573 to 583 (RSKPANSTKSP). A compositionally biased stretch (basic and acidic residues) spans 592-601 (ASLEDNRDLN). The Myb-like domain occupies 617-678 (VAKKITWRKQ…AITRLKWVEP (62 aa)). Disordered stretches follow at residues 757–785 (RGGT…FNSP) and 808–877 (MQAR…TSIY). Composition is skewed to polar residues over residues 775–785 (SRGNNSTFNSP) and 819–836 (SSSM…TSIS). Residues 856-871 (EDDENEDNDDDDDMRE) are compositionally biased toward acidic residues.

This sequence belongs to the KNL2 family. As to quaternary structure, interacts with hcp-3.

Its subcellular location is the nucleus. It localises to the chromosome. The protein resides in the centromere. The protein localises to the kinetochore. Its function is as follows. Required for the recruitment of hcp-3, hcp-4, knl-1, bub-1 and lin-53 to kinetochores, kinetochore assembly, chromosome condensation and chromosome segregation in meiosis and mitosis. The chain is Kinetochore null protein 2 from Caenorhabditis elegans.